The sequence spans 82 residues: Small ribosomal subunit protein eS27 (82 aa).

Residues 37-59 (CPGCFTITTVFSHAQTVVICQGC) form a C4-type zinc finger.

Belongs to the eukaryotic ribosomal protein eS27 family. As to quaternary structure, component of the small ribosomal subunit (SSU). Mature N.crassa ribosomes consist of a small (40S) and a large (60S) subunit. The 40S small subunit contains 1 molecule of ribosomal RNA (18S rRNA) and at least 32 different proteins. The large 60S subunit contains 3 rRNA molecules (26S, 5.8S and 5S rRNA) and at least 42 different proteins. The cofactor is Zn(2+).

The protein localises to the cytoplasm. In terms of biological role, component of the ribosome, a large ribonucleoprotein complex responsible for the synthesis of proteins in the cell. The small ribosomal subunit (SSU) binds messenger RNAs (mRNAs) and translates the encoded message by selecting cognate aminoacyl-transfer RNA (tRNA) molecules. The large subunit (LSU) contains the ribosomal catalytic site termed the peptidyl transferase center (PTC), which catalyzes the formation of peptide bonds, thereby polymerizing the amino acids delivered by tRNAs into a polypeptide chain. The nascent polypeptides leave the ribosome through a tunnel in the LSU and interact with protein factors that function in enzymatic processing, targeting, and the membrane insertion of nascent chains at the exit of the ribosomal tunnel. The polypeptide is Small ribosomal subunit protein eS27 (crp-6) (Neurospora crassa (strain ATCC 24698 / 74-OR23-1A / CBS 708.71 / DSM 1257 / FGSC 987)).